The chain runs to 743 residues: Cap-specific mRNA (nucleoside-2'-O-)-methyltransferase 2 (743 aa).

Residues 113-326 enclose the Adrift-type SAM-dependent 2'-O-MTase domain; it reads ELCTQAWAKF…LYIVCLDYQA (214 aa). Residue lysine 121 is part of the active site. 3 residues coordinate S-adenosyl-L-methionine: glycine 152, tryptophan 171, and aspartate 239. The active site involves aspartate 239. The Proton acceptor role is filled by lysine 279.

Its subcellular location is the nucleus. It is found in the cytoplasm. It carries out the reaction a 5'-end (N(7)-methyl 5'-triphosphoguanosine)-(2'-O-methyl-ribonucleoside)-(ribonucleotide) in mRNA + S-adenosyl-L-methionine = a 5'-end (N(7)-methyl 5'-triphosphoguanosine)-(2'-O-methyl-ribonucleoside)-(2'-O-methyl-ribonucleotide) in mRNA + S-adenosyl-L-homocysteine + H(+). In terms of biological role, S-adenosyl-L-methionine-dependent methyltransferase that mediates mRNA cap2 2'-O-ribose methylation to the 5'-cap structure of mRNAs. Methylates the ribose of the second nucleotide of a m(7)GpppG-capped mRNA and small nuclear RNA (snRNA) (cap0) to produce m(7)GpppRmpNm (cap2). The protein is Cap-specific mRNA (nucleoside-2'-O-)-methyltransferase 2 (cmtr2) of Danio rerio (Zebrafish).